The primary structure comprises 240 residues: APDWSKIPAREITVFHAGATSFEWIGSEHPGASIVKAGQPCIICHETKKGLDYTAKKLAPREPDAQAMPKTVSFPVSVQAAVEKGTLNVRLSFKPPADSKTGSDADNELKAAIMLLDIKVPQAKLAGCWTSCHKDMRGMPGGDAKKGKYVSAGSFELLQWKSGKTSAALPAGVKVESGKDGDRTTVTFSRKLGGAVVEGRSVPFGIAIHANRAAGRMHYVSLGYRLGIGGAPGEVQAAKQ.

Cys41, Cys44, His45, Cys128, Cys132, and His133 together coordinate heme c.

In terms of processing, binds 2 heme c groups per subunit.

In Rhodocyclus tenuis (Rhodospirillum tenue), this protein is Cytochrome c-551.